Consider the following 317-residue polypeptide: Periplasmic [NiFe] hydrogenase small subunit 1 (317 aa).

The segment at residues 1 to 49 (MRFSVGLGKEGAEERLARRGVSRRDFLKFCTAIAVTMGMGPAFAPEVAR) is a signal peptide (tat-type signal). [4Fe-4S] cluster-binding residues include C67, C70, C164, C200, H238, C241, C266, and C272. [3Fe-4S] cluster-binding residues include C281, C299, and C302.

Belongs to the [NiFe]/[NiFeSe] hydrogenase small subunit family. In terms of assembly, heterodimer of a large and a small subunit. The cofactor is [3Fe-4S] cluster. [4Fe-4S] cluster serves as cofactor. In terms of processing, predicted to be exported by the Tat system. The position of the signal peptide cleavage has not been experimentally proven.

The protein resides in the periplasm. It carries out the reaction 2 Fe(III)-[cytochrome c3] + H2 = 2 Fe(II)-[cytochrome c3] + 2 H(+). The chain is Periplasmic [NiFe] hydrogenase small subunit 1 (hynB1) from Nitratidesulfovibrio vulgaris (strain ATCC 29579 / DSM 644 / CCUG 34227 / NCIMB 8303 / VKM B-1760 / Hildenborough) (Desulfovibrio vulgaris).